The primary structure comprises 306 residues: Pantothenate kinase (306 aa).

91-98 contributes to the ATP binding site; it reads GSVAVGKS.

This sequence belongs to the prokaryotic pantothenate kinase family.

Its subcellular location is the cytoplasm. The enzyme catalyses (R)-pantothenate + ATP = (R)-4'-phosphopantothenate + ADP + H(+). It functions in the pathway cofactor biosynthesis; coenzyme A biosynthesis; CoA from (R)-pantothenate: step 1/5. This Streptococcus pneumoniae serotype 4 (strain ATCC BAA-334 / TIGR4) protein is Pantothenate kinase (coaA).